The following is a 2603-amino-acid chain: Protein SABRE (2603 aa).

A signal peptide spans 1–35 (MAASPAKFFFGFLIVSIVLWMIFMLFAWMLSRVLG). Asn196 is a glycosylation site (N-linked (GlcNAc...) asparagine). The interval 259 to 287 (FPKSKQSSASLRSDEVRTSATAASSAKKP) is disordered. Residues Asn331, Asn486, Asn597, Asn807, Asn867, Asn887, Asn1154, Asn1249, Asn1280, and Asn1408 are each glycosylated (N-linked (GlcNAc...) asparagine). The interval 786–814 (PESGCNKGISSVKDGGPSEKINQSNSVNK) is disordered. The disordered stretch occupies residues 1416–1436 (FHQSPSSTEHPTDVGTVYSSQ). N-linked (GlcNAc...) asparagine glycans are attached at residues Asn1492 and Asn1659. Disordered stretches follow at residues 1656–1676 (EFEN…DDDG) and 1717–1777 (EPPK…DDIG). Over residues 1731 to 1748 (KIHEENQKESCPETHQGE) the composition is skewed to basic and acidic residues. Residues 1749 to 1766 (MSRSSASPGRNLPSSPSH) show a composition bias toward polar residues. The stretch at 1995–2023 (VEEVELAKINLEEKERERKLLLDDIRKLS) forms a coiled coil. Asn2333 carries N-linked (GlcNAc...) asparagine glycosylation. Disordered stretches follow at residues 2339–2380 (EQQE…RPRK), 2448–2479 (GKKF…KPDQ), and 2554–2603 (IRRH…DFRE). A compositionally biased stretch (basic and acidic residues) spans 2343-2380 (DFSKQKVKEIKPVKSGRSSHEEKKAGKSHEEKKSRPRK). Asn2467 carries N-linked (GlcNAc...) asparagine glycosylation. The segment covering 2554 to 2565 (IRRHTKKFRPRS) has biased composition (basic residues). The span at 2566 to 2583 (QRGSTSQQRESLPSSPIE) shows a compositional bias: polar residues. Low complexity predominate over residues 2586–2603 (PFESGYSSGSSPYEDFRE).

This sequence belongs to the SABRE family. As to expression, highest levels in leaves, also expressed in leaves, flowers, and siliques, and, to a lower extent, in roots and stems.

Its subcellular location is the secreted. It localises to the golgi apparatus. Functionally, may be involved in membrane trafficking. Required for cell expansion, especially in root cortex, probably by counteracting the action of ethylene in promoting cells radial expansion. Involved in female organ development. Antagonistically interacts with ethylene signaling to regulate plant responses to Pi starvation. This is Protein SABRE from Arabidopsis thaliana (Mouse-ear cress).